A 113-amino-acid chain; its full sequence is MVKIERKATDSAYHEFTKILTSSAQLMAFLNQSDFVKARAKVENETVQQIASHFKFSQENNLNQLILSSFDREEVDQLFVEYIRYVNNQVRQTLNNELITKWKSLFEKRKITD.

The first 38 residues, 1–38, serve as a signal peptide directing secretion; the sequence is MVKIERKATDSAYHEFTKILTSSAQLMAFLNQSDFVKA.

This is an uncharacterized protein from Haemophilus influenzae (strain ATCC 51907 / DSM 11121 / KW20 / Rd).